The chain runs to 456 residues: Methylenetetrahydrofolate--tRNA-(uracil-5-)-methyltransferase TrmFO (456 aa).

9 to 14 (GGGMAG) lines the FAD pocket.

The protein belongs to the MnmG family. TrmFO subfamily. FAD is required as a cofactor.

It localises to the cytoplasm. The catalysed reaction is uridine(54) in tRNA + (6R)-5,10-methylene-5,6,7,8-tetrahydrofolate + NADH + H(+) = 5-methyluridine(54) in tRNA + (6S)-5,6,7,8-tetrahydrofolate + NAD(+). It carries out the reaction uridine(54) in tRNA + (6R)-5,10-methylene-5,6,7,8-tetrahydrofolate + NADPH + H(+) = 5-methyluridine(54) in tRNA + (6S)-5,6,7,8-tetrahydrofolate + NADP(+). Catalyzes the folate-dependent formation of 5-methyl-uridine at position 54 (M-5-U54) in all tRNAs. This is Methylenetetrahydrofolate--tRNA-(uracil-5-)-methyltransferase TrmFO from Novosphingobium aromaticivorans (strain ATCC 700278 / DSM 12444 / CCUG 56034 / CIP 105152 / NBRC 16084 / F199).